A 139-amino-acid polypeptide reads, in one-letter code: GATA transcription factor 16 (139 aa).

Residues 32–86 (NDKKKTCADCGTSKTPLWRGGPVGPKSLCNACGIRNRKKRRGGTEDNKKLKKSSS) form a GATA-type zinc finger. Residues 67–98 (NRKKRRGGTEDNKKLKKSSSGGGNRKFGESLK) are disordered.

It belongs to the type IV zinc-finger family. Class B subfamily.

It localises to the nucleus. Functionally, transcriptional regulator that specifically binds 5'-GATA-3' or 5'-GAT-3' motifs within gene promoters. This is GATA transcription factor 16 (GATA16) from Arabidopsis thaliana (Mouse-ear cress).